A 350-amino-acid chain; its full sequence is tRNA U34 carboxymethyltransferase (350 aa).

Carboxy-S-adenosyl-L-methionine contacts are provided by residues Lys101, Trp125, Lys130, Gly150, 172 to 174 (DPS), 208 to 209 (LE), Met224, Tyr228, and Arg343.

Belongs to the class I-like SAM-binding methyltransferase superfamily. CmoB family. Homotetramer.

The catalysed reaction is carboxy-S-adenosyl-L-methionine + 5-hydroxyuridine(34) in tRNA = 5-carboxymethoxyuridine(34) in tRNA + S-adenosyl-L-homocysteine + H(+). Functionally, catalyzes carboxymethyl transfer from carboxy-S-adenosyl-L-methionine (Cx-SAM) to 5-hydroxyuridine (ho5U) to form 5-carboxymethoxyuridine (cmo5U) at position 34 in tRNAs. In Psychrobacter arcticus (strain DSM 17307 / VKM B-2377 / 273-4), this protein is tRNA U34 carboxymethyltransferase.